An 86-amino-acid polypeptide reads, in one-letter code: MHAYVYKSQLKPDTYVYVPRRDDFSALPAPLLTSLGALTFVLDVALDAQRRLAQADPDKVRSDMSERGFYLQVPPSVASLMPRHYD.

The 85-residue stretch at 1-85 (MHAYVYKSQL…SVASLMPRHY (85 aa)) folds into the YcgL domain.

The polypeptide is YcgL domain-containing protein Smlt4554 (Stenotrophomonas maltophilia (strain K279a)).